Here is a 273-residue protein sequence, read N- to C-terminus: Large ribosomal subunit protein uL2 (273 aa).

Residues 228–273 (VDHPHGGGEGKTSGGRHPVTPWGFPTKGKKTRKNKRTSKFIVKKRK) are disordered. The span at 254–273 (KGKKTRKNKRTSKFIVKKRK) shows a compositional bias: basic residues.

This sequence belongs to the universal ribosomal protein uL2 family. As to quaternary structure, part of the 50S ribosomal subunit. Forms a bridge to the 30S subunit in the 70S ribosome.

In terms of biological role, one of the primary rRNA binding proteins. Required for association of the 30S and 50S subunits to form the 70S ribosome, for tRNA binding and peptide bond formation. It has been suggested to have peptidyltransferase activity; this is somewhat controversial. Makes several contacts with the 16S rRNA in the 70S ribosome. This is Large ribosomal subunit protein uL2 from Rickettsia felis (strain ATCC VR-1525 / URRWXCal2) (Rickettsia azadi).